We begin with the raw amino-acid sequence, 30 residues long: NLYQFKNMIHCTVPSRPWWHFADYGCYCGR.

This sequence belongs to the phospholipase A2 family. Group I subfamily. Requires Ca(2+) as cofactor. As to expression, expressed by the venom gland.

It is found in the secreted. It catalyses the reaction a 1,2-diacyl-sn-glycero-3-phosphocholine + H2O = a 1-acyl-sn-glycero-3-phosphocholine + a fatty acid + H(+). Its function is as follows. Snake venom phospholipase A2 (PLA2) that shows weak anticoagulant activity. Is more catalytically active than the strong anticoagulant protein CM-IV found in this venom. Acts by inhibiting the complex composed of tissue factor (F3) and coagulation factor VIIa (F7) (TF-VIIa complex) by only enzymatic mechanism. PLA2 catalyzes the calcium-dependent hydrolysis of the 2-acyl groups in 3-sn-phosphoglycerides. The sequence is that of Basic phospholipase A2 CM-I from Naja nigricollis (Black-necked spitting cobra).